Reading from the N-terminus, the 274-residue chain is Ribosomal RNA small subunit methyltransferase A (274 aa).

Positions 17, 19, 44, 65, 89, and 111 each coordinate S-adenosyl-L-methionine.

This sequence belongs to the class I-like SAM-binding methyltransferase superfamily. rRNA adenine N(6)-methyltransferase family. RsmA subfamily.

It localises to the cytoplasm. It catalyses the reaction adenosine(1518)/adenosine(1519) in 16S rRNA + 4 S-adenosyl-L-methionine = N(6)-dimethyladenosine(1518)/N(6)-dimethyladenosine(1519) in 16S rRNA + 4 S-adenosyl-L-homocysteine + 4 H(+). In terms of biological role, specifically dimethylates two adjacent adenosines (A1518 and A1519) in the loop of a conserved hairpin near the 3'-end of 16S rRNA in the 30S particle. May play a critical role in biogenesis of 30S subunits. In Buchnera aphidicola subsp. Schizaphis graminum (strain Sg), this protein is Ribosomal RNA small subunit methyltransferase A.